We begin with the raw amino-acid sequence, 612 residues long: Alpha-glycerophosphate oxidase (612 aa).

21 to 49 (DLLIIGGGITGAGVALQAAASGLDTGLIE) is a binding site for FAD. The span at 398–408 (VETSTSEKELD) shows a compositional bias: basic and acidic residues. The tract at residues 398–418 (VETSTSEKELDPSAVSRGSSF) is disordered.

The protein belongs to the FAD-dependent glycerol-3-phosphate dehydrogenase family. FAD is required as a cofactor.

The protein localises to the cytoplasm. The catalysed reaction is sn-glycerol 3-phosphate + O2 = dihydroxyacetone phosphate + H2O2. In Streptococcus pyogenes serotype M3 (strain ATCC BAA-595 / MGAS315), this protein is Alpha-glycerophosphate oxidase (glpO).